We begin with the raw amino-acid sequence, 78 residues long: Mandibular organ-inhibiting hormone 2 (78 aa).

Disulfide bonds link Cys-7–Cys-44, Cys-24–Cys-40, and Cys-27–Cys-53.

Belongs to the arthropod CHH/MIH/GIH/VIH hormone family. In terms of tissue distribution, produced by the medulla terminalis X-organ in the eyestalks and transported to the sinus gland where it is stored and released.

It is found in the secreted. In terms of biological role, represses the synthesis of methyl farnesoate, the precursor of insect juvenile hormone III in the mandibular organ. This Cancer pagurus (Rock crab) protein is Mandibular organ-inhibiting hormone 2.